The primary structure comprises 157 residues: SsrA-binding protein (157 aa).

Residues 134-151 (HDKRETEKKRDWSKEKGR) show a composition bias toward basic and acidic residues. The disordered stretch occupies residues 134 to 157 (HDKRETEKKRDWSKEKGRLMRAKG).

Belongs to the SmpB family.

Its subcellular location is the cytoplasm. Its function is as follows. Required for rescue of stalled ribosomes mediated by trans-translation. Binds to transfer-messenger RNA (tmRNA), required for stable association of tmRNA with ribosomes. tmRNA and SmpB together mimic tRNA shape, replacing the anticodon stem-loop with SmpB. tmRNA is encoded by the ssrA gene; the 2 termini fold to resemble tRNA(Ala) and it encodes a 'tag peptide', a short internal open reading frame. During trans-translation Ala-aminoacylated tmRNA acts like a tRNA, entering the A-site of stalled ribosomes, displacing the stalled mRNA. The ribosome then switches to translate the ORF on the tmRNA; the nascent peptide is terminated with the 'tag peptide' encoded by the tmRNA and targeted for degradation. The ribosome is freed to recommence translation, which seems to be the essential function of trans-translation. The chain is SsrA-binding protein from Rhodopseudomonas palustris (strain BisA53).